Consider the following 365-residue polypeptide: Virion host shutoff protein (365 aa).

The protein belongs to the herpesviridae VHS protein family.

It is found in the virion. In terms of biological role, minor structural protein that acts as an endoribonuclease during lytic infection. Degrades host mRNAs in the cytoplasm by cutting them at preferred sites, including some in regions of translation initiation. This Sus scrofa (Pig) protein is Virion host shutoff protein (VHS).